The following is a 463-amino-acid chain: ATP-dependent protease ATPase subunit HslU (463 aa).

ATP contacts are provided by residues Ile19, Gly61–Glu66, Asp277, Glu341, and Arg413.

Belongs to the ClpX chaperone family. HslU subfamily. As to quaternary structure, a double ring-shaped homohexamer of HslV is capped on each side by a ring-shaped HslU homohexamer. The assembly of the HslU/HslV complex is dependent on binding of ATP.

Its subcellular location is the cytoplasm. ATPase subunit of a proteasome-like degradation complex; this subunit has chaperone activity. The binding of ATP and its subsequent hydrolysis by HslU are essential for unfolding of protein substrates subsequently hydrolyzed by HslV. HslU recognizes the N-terminal part of its protein substrates and unfolds these before they are guided to HslV for hydrolysis. In Bacillus cereus (strain B4264), this protein is ATP-dependent protease ATPase subunit HslU.